The chain runs to 43 residues: Cytochrome b559 subunit beta (43 aa).

Residues 18 to 34 (WLAVHTLAIPTVFFLGA) traverse the membrane as a helical segment. H22 contacts heme.

It belongs to the PsbE/PsbF family. Heterodimer of an alpha subunit and a beta subunit. PSII is composed of 1 copy each of membrane proteins PsbA, PsbB, PsbC, PsbD, PsbE, PsbF, PsbH, PsbI, PsbJ, PsbK, PsbL, PsbM, PsbT, PsbX, PsbY, PsbZ, Psb30/Ycf12, peripheral proteins PsbO, CyanoQ (PsbQ), PsbU, PsbV and a large number of cofactors. It forms dimeric complexes. Heme b serves as cofactor.

Its subcellular location is the cellular thylakoid membrane. Its function is as follows. This b-type cytochrome is tightly associated with the reaction center of photosystem II (PSII). PSII is a light-driven water:plastoquinone oxidoreductase that uses light energy to abstract electrons from H(2)O, generating O(2) and a proton gradient subsequently used for ATP formation. It consists of a core antenna complex that captures photons, and an electron transfer chain that converts photonic excitation into a charge separation. The sequence is that of Cytochrome b559 subunit beta from Synechococcus sp. (strain JA-2-3B'a(2-13)) (Cyanobacteria bacterium Yellowstone B-Prime).